Consider the following 167-residue polypeptide: Pathogenesis-related protein PRMS (167 aa).

The signal sequence occupies residues 1–27 (MEASNKLAVLLLWLVMAAATAVHPSYS). The SCP domain occupies 37 to 155 (PQNSARAAVG…NRGVFIICNY (119 aa)). 3 cysteine pairs are disulfide-bonded: cysteine 71–cysteine 143, cysteine 116–cysteine 122, and cysteine 138–cysteine 153.

The protein belongs to the CRISP family.

In terms of biological role, probably involved in the defense reaction of plants against pathogens. This chain is Pathogenesis-related protein PRMS (PRMS), found in Zea mays (Maize).